The sequence spans 365 residues: Hematopoietic SH2 domain-containing protein homolog (365 aa).

The SH2 domain occupies 34-125 (WFHGIISRKA…PYNELLTVAC (92 aa)). Disordered stretches follow at residues 199–278 (QSTD…QQKP) and 335–365 (AEHP…APGY). Polar residues predominate over residues 257–277 (QQITPNTPNEGRTQQKNQQQK).

Functionally, may be an adapter protein involved in tyrosine kinase signaling. This is Hematopoietic SH2 domain-containing protein homolog (hsh2d) from Danio rerio (Zebrafish).